The sequence spans 141 residues: Bombinins BLP-7/H-BO (141 aa).

The signal sequence occupies residues 1–18 (MNFKYIIAVSFLIASTYA). The propeptide occupies 19 to 43 (RSVKNDEQSLSQRDVLDEESLREIR). Asn70 bears the Asparagine amide mark. A propeptide spanning residues 74-123 (TAEEHEVMKRLEAVMRDLDSLDHPEEASEKETRGFNQEEIANLFTKKEKR) is cleaved from the precursor. The residue at position 140 (Leu140) is a Leucine amide.

It belongs to the bombinin family. Expressed by the skin glands.

The protein resides in the secreted. Its function is as follows. Antimicrobial peptide with activity against Gram-positive and -negative bacteria and fungi. Shows activity against P.acnes (MIC=5 uM), E.coli (MIC=5-6.3 uM), S.aureus (MIC=5-6.3 uM), M.luteus, S.cerevisiae and C.albicans (MIC=10-12.5 uM). Also reduces the production of interleukin (IL)-8 and granulocyte-macrophage colony stimulating factor (CSF2) in normal human epidermal keratinocytes (NHEKs). Shows anticancer activity against three human hepatoma cell lines. In vivo, using the rat ear edema model, suppress P.acnes-induced skin inflammation, significantly reducing the ear thickness. Shows weak hemolytic activity against human erythrocytes. Functionally, shows weak antimicrobial activity (tested on E.coli, S.aureus and C.albicans). Shows high hemolytic activity against human erythrocytes (38% erythrocyte lysis at 80.0 uM, and up to 85% at 159.7 uM). The sequence is that of Bombinins BLP-7/H-BO from Bombina orientalis (Oriental fire-bellied toad).